Reading from the N-terminus, the 109-residue chain is MANLFNWLPLLSGRQADGIKAKVEIYTWQTCPFCIRAKLLLWWKGVKFIEYKIDGDDQARQAMAARAEGRRTVPQIFVNDQGIGGCDQLYGLDSRGQLDPLLATPPNPA.

The Glutaredoxin domain maps to 11–109 (LSGRQADGIK…PLLATPPNPA (99 aa)). A disulfide bridge links Cys31 with Cys34.

It belongs to the glutaredoxin family.

Functionally, has a glutathione-disulfide oxidoreductase activity in the presence of NADPH and glutathione reductase. Reduces low molecular weight disulfides and proteins. The protein is Probable glutaredoxin slr1562 of Synechocystis sp. (strain ATCC 27184 / PCC 6803 / Kazusa).